Here is a 961-residue protein sequence, read N- to C-terminus: Zinc finger protein basonuclin-1 (961 aa).

The interval 210–219 (MTFMLPFQFF) is hydrophobic. C2H2-type zinc fingers lie at residues 325–348 (VFCT…NAVH) and 353–382 (HKCT…PRLH). A disordered region spans residues 370–393 (RNRHSANPNPRLHMPMNRNNRDKD). The Nuclear localization signal motif lies at 501–507 (PKKKSRK). Phosphoserine occurs at positions 505 and 509. A disordered region spans residues 523–572 (EEKRHSLSSDDEVPLQVVSEDEPEDSSPRSDRVPEEQHTQLSLEEPLPQG). Positions 531–547 (SDDEVPLQVVSEDEPED) are enriched in acidic residues. Residues 548 to 560 (SSPRSDRVPEEQH) show a composition bias toward basic and acidic residues. C2H2-type zinc fingers lie at residues 687–711 (FQCD…NTHA) and 715–743 (HACT…SLHQ). The segment at 810-864 (ESYNSGPPSEGTILDLSTTSSMKSESSSHSSWDSDGVSEEGTALMEDSDGNCEGQ) is disordered. Residues 826 to 844 (STTSSMKSESSSHSSWDSD) show a composition bias toward low complexity. C2H2-type zinc fingers lie at residues 895-918 (ITCH…KTVH) and 923-950 (HKCK…PNLH). Positions 937–961 (VRSRNRHSQNPNLHKSLASSPSHLQ) are disordered.

Interacts with HSF2BP (via C-terminus). In terms of processing, phosphorylation on Ser-505 and Ser-509 leads to cytoplasmic localization. In terms of tissue distribution, epidermis and germ cells of testis and ovary.

The protein localises to the nucleus. The protein resides in the cytoplasm. It localises to the nucleoplasm. Transcriptional activator. It is likely involved in the regulation of keratinocytes terminal differentiation in squamous epithelia and hair follicles. Required for the maintenance of spermatogenesis. It is involved in the positive regulation of oocyte maturation, probably acting through the control of BMP15 levels and regulation of AKT signaling cascade. May also play a role in the early development of embryos. The chain is Zinc finger protein basonuclin-1 (Bnc1) from Mus musculus (Mouse).